Consider the following 595-residue polypeptide: MVLAHSINTNPNTNTNTNNTSTTSSTTTIPNDSKILCINFNQDQGCFAISHEQGFLVYNTDPIELRVKRNFIVNSHTTSSRSNHSNGSNSNNNHRNNSTGSNGSVSSSGSNNETTLGYKSTHKSASGSGSGSGSGIGHISMLHRTNYLALIGGGENPKFPINKLIIWDDLKRKTSLSLEFDTPVLNVLLSRVRIIVVLIDQIIVYGFAAPPKKFQTFNTINNPLGIADLSVNSQQSNVHLYNNYSSNSAQAQVSGTTTTTHYDFSKRKSLSPTNSSNSSSTSLKENGTNLTTYPSPSSTTSASASVATITNTPEAATTANPTTATTTATTTATTTTTTTSAKPLVNGIGSSYQTLAFPGRSMGQIQIVDVGNNHHSGTNIKPTINIIKAHKSNIRCLCLNRTGTLIASASITGTIIRIHSTRTTALLYEFRRGIDRAIITSMKFSHDDSKLAVLSDKHTLHVYNIDETQYPNDGGSGGTKDGGGGGRGSKNRHHLLNGLLPYLPNYFQSTWSFCSVNTNKYHTSDLEDNSQQQQQQWVANGTGGGGVDEGVIGWSGNDSIIIIWKLKKIWEKYVIVETENHQYDLIRSSWKRLDS.

The interval 1 to 28 is disordered; the sequence is MVLAHSINTNPNTNTNTNNTSTTSSTTT. The WD 1 repeat unit spans residues 30–68; that stretch reads PNDSKILCINFNQDQGCFAISHEQGFLVYNTDPIELRVK. Low complexity-rich tracts occupy residues 76–112 and 270–339; these read HTTSSRSNHSNGSNSNNNHRNNSTGSNGSVSSSGSNN and LSPT…TTTT. 2 disordered regions span residues 76–132 and 264–342; these read HTTS…GSGS and FSKR…TSAK. WD repeat units follow at residues 389–429 and 434–473; these read AHKS…LLYE and IDRAIITSMKFSHDDSKLAVLSDKHTLHVYNIDETQYPND. A disordered region spans residues 467 to 490; that stretch reads ETQYPNDGGSGGTKDGGGGGRGSK. Over residues 474 to 488 the composition is skewed to gly residues; that stretch reads GGSGGTKDGGGGGRG.

This sequence belongs to the WD repeat PROPPIN family.

The protein localises to the vacuole membrane. Its subcellular location is the cytoplasmic vesicle membrane. Its function is as follows. Involved in mitochondrial or peroxisomal functions and amino acid signaling pathways. This chain is SVP1-like protein 2 (HSV2), found in Candida albicans (strain SC5314 / ATCC MYA-2876) (Yeast).